The chain runs to 1099 residues: Carbamoyl phosphate synthase large chain (1099 aa).

Residues 1 to 402 are carboxyphosphate synthetic domain; sequence MPKREDIKRI…ALGKALRSLE (402 aa). ATP-binding residues include R129, R169, G175, G176, E208, V210, E215, G241, I242, H243, Q285, and E299. Residues 133-328 form the ATP-grasp 1 domain; it reads KETMEKAGLE…IAKVAALLAV (196 aa). Mg(2+) contacts are provided by Q285, E299, and N301. 3 residues coordinate Mn(2+): Q285, E299, and N301. The segment at 403 to 541 is oligomerization domain; the sequence is LDAAPKLDLE…STYNGVENEA (139 aa). A carbamoyl phosphate synthetic domain region spans residues 542-944; the sequence is VPSDREKIMI…AFAKAQIAAG (403 aa). An ATP-grasp 2 domain is found at 666–857; the sequence is AKLLKQIGLK…VARIAAKIMV (192 aa). R702, K741, L743, E748, G773, V774, H775, S776, Q816, and E828 together coordinate ATP. Residues Q816, E828, and N830 each coordinate Mg(2+). Mn(2+)-binding residues include Q816, E828, and N830. One can recognise an MGS-like domain in the interval 945–1099; that stretch reads NPLPTTGAIL…VRRLTDTWKM (155 aa). The segment at 945–1099 is allosteric domain; sequence NPLPTTGAIL…VRRLTDTWKM (155 aa).

This sequence belongs to the CarB family. In terms of assembly, composed of two chains; the small (or glutamine) chain promotes the hydrolysis of glutamine to ammonia, which is used by the large (or ammonia) chain to synthesize carbamoyl phosphate. Tetramer of heterodimers (alpha,beta)4. The cofactor is Mg(2+). It depends on Mn(2+) as a cofactor.

It carries out the reaction hydrogencarbonate + L-glutamine + 2 ATP + H2O = carbamoyl phosphate + L-glutamate + 2 ADP + phosphate + 2 H(+). The catalysed reaction is hydrogencarbonate + NH4(+) + 2 ATP = carbamoyl phosphate + 2 ADP + phosphate + 2 H(+). It functions in the pathway amino-acid biosynthesis; L-arginine biosynthesis; carbamoyl phosphate from bicarbonate: step 1/1. It participates in pyrimidine metabolism; UMP biosynthesis via de novo pathway; (S)-dihydroorotate from bicarbonate: step 1/3. Large subunit of the glutamine-dependent carbamoyl phosphate synthetase (CPSase). CPSase catalyzes the formation of carbamoyl phosphate from the ammonia moiety of glutamine, carbonate, and phosphate donated by ATP, constituting the first step of 2 biosynthetic pathways, one leading to arginine and/or urea and the other to pyrimidine nucleotides. The large subunit (synthetase) binds the substrates ammonia (free or transferred from glutamine from the small subunit), hydrogencarbonate and ATP and carries out an ATP-coupled ligase reaction, activating hydrogencarbonate by forming carboxy phosphate which reacts with ammonia to form carbamoyl phosphate. This Thermotoga sp. (strain RQ2) protein is Carbamoyl phosphate synthase large chain.